A 405-amino-acid polypeptide reads, in one-letter code: Multifunctional CCA protein (405 aa).

The ATP site is built by G8 and R11. The CTP site is built by G8 and R11. Mg(2+) is bound by residues D21 and D23. Residues R91, R137, and R140 each contribute to the ATP site. CTP contacts are provided by R91, R137, and R140. An HD domain is found at 228–329; the sequence is TGIHSMMVLE…NDFLDKCDVW (102 aa).

Belongs to the tRNA nucleotidyltransferase/poly(A) polymerase family. Bacterial CCA-adding enzyme type 1 subfamily. Monomer. Can also form homodimers and oligomers. Requires Mg(2+) as cofactor. Ni(2+) is required as a cofactor.

It carries out the reaction a tRNA precursor + 2 CTP + ATP = a tRNA with a 3' CCA end + 3 diphosphate. The enzyme catalyses a tRNA with a 3' CCA end + 2 CTP + ATP = a tRNA with a 3' CCACCA end + 3 diphosphate. Functionally, catalyzes the addition and repair of the essential 3'-terminal CCA sequence in tRNAs without using a nucleic acid template. Adds these three nucleotides in the order of C, C, and A to the tRNA nucleotide-73, using CTP and ATP as substrates and producing inorganic pyrophosphate. tRNA 3'-terminal CCA addition is required both for tRNA processing and repair. Also involved in tRNA surveillance by mediating tandem CCA addition to generate a CCACCA at the 3' terminus of unstable tRNAs. While stable tRNAs receive only 3'-terminal CCA, unstable tRNAs are marked with CCACCA and rapidly degraded. The sequence is that of Multifunctional CCA protein from Pseudoalteromonas atlantica (strain T6c / ATCC BAA-1087).